The chain runs to 200 residues: ATP-dependent Clp protease proteolytic subunit (200 aa).

Serine 96 (nucleophile) is an active-site residue. Histidine 121 is a catalytic residue.

This sequence belongs to the peptidase S14 family. As to quaternary structure, fourteen ClpP subunits assemble into 2 heptameric rings which stack back to back to give a disk-like structure with a central cavity, resembling the structure of eukaryotic proteasomes.

The protein localises to the cytoplasm. It carries out the reaction Hydrolysis of proteins to small peptides in the presence of ATP and magnesium. alpha-casein is the usual test substrate. In the absence of ATP, only oligopeptides shorter than five residues are hydrolyzed (such as succinyl-Leu-Tyr-|-NHMec, and Leu-Tyr-Leu-|-Tyr-Trp, in which cleavage of the -Tyr-|-Leu- and -Tyr-|-Trp bonds also occurs).. Functionally, cleaves peptides in various proteins in a process that requires ATP hydrolysis. Has a chymotrypsin-like activity. Plays a major role in the degradation of misfolded proteins. The sequence is that of ATP-dependent Clp protease proteolytic subunit from Leuconostoc citreum (strain KM20).